A 653-amino-acid polypeptide reads, in one-letter code: Protein fem-1 homolog A (653 aa).

7 ANK repeats span residues 2-31 (DLHT…REEL), 40-70 (SGGT…SVEA), 82-111 (EGAP…SVNR), 115-145 (TNST…DLEV), 149-178 (HGHT…QVNR), 182-211 (KGNT…RMER), and 214-243 (YGMT…AGDE). S108 is subject to Phosphoserine. The interval 242 to 274 (DEQAQPGLARVQPQGARSSPEEPPSGESYESCC) is disordered. TPR repeat units lie at residues 282 to 316 (VEAL…RHQG) and 374 to 407 (SYYI…QQNN). 2 ANK repeats span residues 518–560 (NGFT…DPDS) and 564–593 (DNNT…HMDA).

Belongs to the fem-1 family. As to quaternary structure, component of a CRL2 E3 ubiquitin-protein ligase complex, also named ECS (Elongin BC-CUL2/5-SOCS-box protein) complex, composed of CUL2, Elongin BC (ELOB and ELOC), RBX1 and substrate-specific adapter FEM1A. Interacts with PTGER4. Interacts with NFKB1; the interaction is direct. Post-translationally, phosphorylated; highly phosphorylated in myoblasts and myotubes. Phosphorylation at Ser-108 promotes PGE2-EP4-mediated inhibition of inflammation. Dephosphorylated by protein phosphatase 2A (PP2A).

The protein localises to the mitochondrion. It localises to the cytoplasm. It functions in the pathway protein modification; protein ubiquitination. Functionally, substrate-recognition component of a Cul2-RING (CRL2) E3 ubiquitin-protein ligase complex of the DesCEND (destruction via C-end degrons) pathway, which recognizes a C-degron located at the extreme C terminus of target proteins, leading to their ubiquitination and degradation. The C-degron recognized by the DesCEND pathway is usually a motif of less than ten residues and can be present in full-length proteins, truncated proteins or proteolytically cleaved forms. The CRL2(FEM1A) complex specifically recognizes proteins with an arginine at the C-terminus: recognizes and binds proteins ending with -Lys/Arg-Xaa-Arg and -Lys/Arg-Xaa-Xaa-Arg C-degrons, such as SIL1 or OR51B2, leading to their ubiquitination and degradation. Involved in PGE2-EP4-mediated inhibition of inflammation of macrophages via interaction with NFKB1 and PTGER4. Promotes inflammation in brain microglia through MAP2K4/MKK4-mediated signaling. The polypeptide is Protein fem-1 homolog A (Bos taurus (Bovine)).